The following is a 286-amino-acid chain: uncharacterized protein (286 aa).

A helical membrane pass occupies residues 8–28 (PLSGFISSLIWWLLFFYLIMA).

To M.jannaschii MJ1495.

It is found in the membrane. This is an uncharacterized protein from Methanocaldococcus jannaschii (strain ATCC 43067 / DSM 2661 / JAL-1 / JCM 10045 / NBRC 100440) (Methanococcus jannaschii).